A 141-amino-acid polypeptide reads, in one-letter code: MAKKVAAQIKLQLPAGKATPAPPVGPALGQHGVNIMEFCKRFNAETADKAGMILPVVITVYEDKSFTFIIKTPPASFLLKKAAGIEKGSSEPKRKIVGKVTRKQIEEIAKTKMPDLNANSLEAAMKIIEGTAKSMGIEVVD.

Belongs to the universal ribosomal protein uL11 family. In terms of assembly, part of the ribosomal stalk of the 50S ribosomal subunit. Interacts with L10 and the large rRNA to form the base of the stalk. L10 forms an elongated spine to which L12 dimers bind in a sequential fashion forming a multimeric L10(L12)X complex. In terms of processing, one or more lysine residues are methylated.

Its function is as follows. Forms part of the ribosomal stalk which helps the ribosome interact with GTP-bound translation factors. The sequence is that of Large ribosomal subunit protein uL11 from Thermotoga sp. (strain RQ2).